Here is a 93-residue protein sequence, read N- to C-terminus: Aspartyl/glutamyl-tRNA(Asn/Gln) amidotransferase subunit C (93 aa).

This sequence belongs to the GatC family. As to quaternary structure, heterotrimer of A, B and C subunits.

The catalysed reaction is L-glutamyl-tRNA(Gln) + L-glutamine + ATP + H2O = L-glutaminyl-tRNA(Gln) + L-glutamate + ADP + phosphate + H(+). It catalyses the reaction L-aspartyl-tRNA(Asn) + L-glutamine + ATP + H2O = L-asparaginyl-tRNA(Asn) + L-glutamate + ADP + phosphate + 2 H(+). Its function is as follows. Allows the formation of correctly charged Asn-tRNA(Asn) or Gln-tRNA(Gln) through the transamidation of misacylated Asp-tRNA(Asn) or Glu-tRNA(Gln) in organisms which lack either or both of asparaginyl-tRNA or glutaminyl-tRNA synthetases. The reaction takes place in the presence of glutamine and ATP through an activated phospho-Asp-tRNA(Asn) or phospho-Glu-tRNA(Gln). This is Aspartyl/glutamyl-tRNA(Asn/Gln) amidotransferase subunit C from Nautilia profundicola (strain ATCC BAA-1463 / DSM 18972 / AmH).